The following is a 404-amino-acid chain: Tryptophan synthase beta chain (404 aa).

Position 98 is an N6-(pyridoxal phosphate)lysine (Lys98).

It belongs to the TrpB family. In terms of assembly, tetramer of two alpha and two beta chains. Requires pyridoxal 5'-phosphate as cofactor.

It catalyses the reaction (1S,2R)-1-C-(indol-3-yl)glycerol 3-phosphate + L-serine = D-glyceraldehyde 3-phosphate + L-tryptophan + H2O. The protein operates within amino-acid biosynthesis; L-tryptophan biosynthesis; L-tryptophan from chorismate: step 5/5. Functionally, the beta subunit is responsible for the synthesis of L-tryptophan from indole and L-serine. This chain is Tryptophan synthase beta chain, found in Rhodopseudomonas palustris (strain HaA2).